A 350-amino-acid chain; its full sequence is tRNA uridine(34) hydroxylase (350 aa).

The Rhodanese domain occupies 146–240 (DDPDALFIDM…YARKAREQGL (95 aa)). The active-site Cysteine persulfide intermediate is C200.

The protein belongs to the TrhO family.

The enzyme catalyses uridine(34) in tRNA + AH2 + O2 = 5-hydroxyuridine(34) in tRNA + A + H2O. Its function is as follows. Catalyzes oxygen-dependent 5-hydroxyuridine (ho5U) modification at position 34 in tRNAs, the first step in 5-carboxymethoxyuridine (cmo5U) biosynthesis. May be part of an alternate pathway, which is able to bypass cmo5U biogenesis in a subset of tRNAs under aerobic conditions. The chain is tRNA uridine(34) hydroxylase from Escherichia coli O157:H7.